Here is a 206-residue protein sequence, read N- to C-terminus: Dephospho-CoA kinase (206 aa).

The region spanning 4-200 is the DPCK domain; sequence IVALTGGIGS…AYYLQLASQF (197 aa). ATP is bound at residue 12 to 17; it reads GSGKST.

Belongs to the CoaE family.

It is found in the cytoplasm. It catalyses the reaction 3'-dephospho-CoA + ATP = ADP + CoA + H(+). It participates in cofactor biosynthesis; coenzyme A biosynthesis; CoA from (R)-pantothenate: step 5/5. Catalyzes the phosphorylation of the 3'-hydroxyl group of dephosphocoenzyme A to form coenzyme A. The polypeptide is Dephospho-CoA kinase (Escherichia coli O6:H1 (strain CFT073 / ATCC 700928 / UPEC)).